Consider the following 414-residue polypeptide: MKTYLVGGAVRDKYLQLPTQDRDWVVVGAAPQTLLAQGYQQVGKDFPVFLHPRSKEEYALARTERKAGQGYTGFSTYFAPDVTLEQDLLRRDLTINAMAEDDEGQLIDPYGGLQDLQQRQLRHVSEAFVEDPLRVLRVARFAARFAPLGFEVAAPTLALMQQMSQQGELAHLTPERVWLETEKALSGPVPQVYFQVLRDCGALAVLFPEIDRLFGVPAPAQWHPEIDTGIHTLLTLAMASHLSDDVAVRFAALTHDVGKGLTNPNFWPHHHGHGPAGVRLVREMCQRLRTPNPVRDLALLVAEYHDLIHTVERLRPATLLKLLDTIDVWRRPQRLQQMILCSEADARGRTGLEDQPYPQAGYLRAAYHQAAQVAVCNVITDGFQGAAIREELQTRRLQALKSWKAAQEAALNAE.

2 residues coordinate ATP: Gly8 and Arg11. CTP is bound by residues Gly8 and Arg11. Mg(2+)-binding residues include Asp21 and Asp23. ATP-binding residues include Arg91, Arg137, and Arg140. Residues Arg91, Arg137, and Arg140 each coordinate CTP. The region spanning 228 to 329 is the HD domain; that stretch reads TGIHTLLTLA…LKLLDTIDVW (102 aa).

This sequence belongs to the tRNA nucleotidyltransferase/poly(A) polymerase family. Bacterial CCA-adding enzyme type 1 subfamily. Monomer. Can also form homodimers and oligomers. The cofactor is Mg(2+). Ni(2+) serves as cofactor.

The enzyme catalyses a tRNA precursor + 2 CTP + ATP = a tRNA with a 3' CCA end + 3 diphosphate. The catalysed reaction is a tRNA with a 3' CCA end + 2 CTP + ATP = a tRNA with a 3' CCACCA end + 3 diphosphate. In terms of biological role, catalyzes the addition and repair of the essential 3'-terminal CCA sequence in tRNAs without using a nucleic acid template. Adds these three nucleotides in the order of C, C, and A to the tRNA nucleotide-73, using CTP and ATP as substrates and producing inorganic pyrophosphate. tRNA 3'-terminal CCA addition is required both for tRNA processing and repair. Also involved in tRNA surveillance by mediating tandem CCA addition to generate a CCACCA at the 3' terminus of unstable tRNAs. While stable tRNAs receive only 3'-terminal CCA, unstable tRNAs are marked with CCACCA and rapidly degraded. In Edwardsiella ictaluri (strain 93-146), this protein is Multifunctional CCA protein.